A 643-amino-acid polypeptide reads, in one-letter code: 1-deoxy-D-xylulose-5-phosphate synthase (643 aa).

Thiamine diphosphate contacts are provided by residues H71 and 112 to 114 (SHA). D144 serves as a coordination point for Mg(2+). Residues 145-146 (GA), N173, Y284, and E365 contribute to the thiamine diphosphate site. A Mg(2+)-binding site is contributed by N173.

Belongs to the transketolase family. DXPS subfamily. As to quaternary structure, homodimer. Mg(2+) serves as cofactor. The cofactor is thiamine diphosphate.

The catalysed reaction is D-glyceraldehyde 3-phosphate + pyruvate + H(+) = 1-deoxy-D-xylulose 5-phosphate + CO2. Its pathway is metabolic intermediate biosynthesis; 1-deoxy-D-xylulose 5-phosphate biosynthesis; 1-deoxy-D-xylulose 5-phosphate from D-glyceraldehyde 3-phosphate and pyruvate: step 1/1. Functionally, catalyzes the acyloin condensation reaction between C atoms 2 and 3 of pyruvate and glyceraldehyde 3-phosphate to yield 1-deoxy-D-xylulose-5-phosphate (DXP). The chain is 1-deoxy-D-xylulose-5-phosphate synthase from Mycobacterium leprae (strain Br4923).